Reading from the N-terminus, the 104-residue chain is UPF0145 protein Hlac_1015 (104 aa).

The protein belongs to the UPF0145 family.

This Halorubrum lacusprofundi (strain ATCC 49239 / DSM 5036 / JCM 8891 / ACAM 34) protein is UPF0145 protein Hlac_1015.